A 229-amino-acid polypeptide reads, in one-letter code: Echinolectin 1 (229 aa).

Asn94 is a glycosylation site (N-linked (GlcNAc...) asparagine).

The protein resides in the secreted. The protein is Echinolectin 1 of Echinometra lucunter (Rock-boring urchin).